Here is a 227-residue protein sequence, read N- to C-terminus: 7-cyano-7-deazaguanine synthase (227 aa).

Phe-16–Leu-26 contributes to the ATP binding site. Zn(2+) is bound by residues Cys-194, Cys-202, Cys-205, and Cys-208.

It belongs to the QueC family. Requires Zn(2+) as cofactor.

The enzyme catalyses 7-carboxy-7-deazaguanine + NH4(+) + ATP = 7-cyano-7-deazaguanine + ADP + phosphate + H2O + H(+). It functions in the pathway purine metabolism; 7-cyano-7-deazaguanine biosynthesis. Catalyzes the ATP-dependent conversion of 7-carboxy-7-deazaguanine (CDG) to 7-cyano-7-deazaguanine (preQ(0)). This Haemophilus influenzae (strain PittEE) protein is 7-cyano-7-deazaguanine synthase.